The primary structure comprises 154 residues: uncharacterized protein (154 aa).

This is an uncharacterized protein from Sulfolobus islandicus rod-shaped virus 1 (SIRV-1).